The chain runs to 246 residues: 23S rRNA (guanosine-2'-O-)-methyltransferase RlmB (246 aa).

Positions 198, 218, and 227 each coordinate S-adenosyl-L-methionine.

The protein belongs to the class IV-like SAM-binding methyltransferase superfamily. RNA methyltransferase TrmH family. RlmB subfamily.

It is found in the cytoplasm. It carries out the reaction guanosine(2251) in 23S rRNA + S-adenosyl-L-methionine = 2'-O-methylguanosine(2251) in 23S rRNA + S-adenosyl-L-homocysteine + H(+). Functionally, specifically methylates the ribose of guanosine 2251 in 23S rRNA. This is 23S rRNA (guanosine-2'-O-)-methyltransferase RlmB from Shewanella oneidensis (strain ATCC 700550 / JCM 31522 / CIP 106686 / LMG 19005 / NCIMB 14063 / MR-1).